The primary structure comprises 1288 residues: CLIP-associating protein 2 (1288 aa).

A disordered region spans residues M1–G62. Composition is skewed to low complexity over residues G19–P32 and E40–G62. Residues G62–S312 are TOG 1. 3 HEAT repeats span residues H174 to T209, H210 to T246, and R251 to G288. 2 disordered regions span residues S314 to L571 and A614 to I634. Composition is skewed to low complexity over residues S317–S337 and P347–S358. 2 stretches are compositionally biased toward polar residues: residues K406–D421 and T468–Q478. Positions S490–P493 match the SXIP motif 1 motif. The span at Q496–Y518 shows a compositional bias: polar residues. The short motif at S527 to P530 is the SXIP motif 2 element. Over residues S616 to R630 the composition is skewed to low complexity. The TOG 2 stretch occupies residues M638 to N889. 2 HEAT repeats span residues R718 to A755 and L780 to P817. Polar residues predominate over residues G891 to S900. Disordered stretches follow at residues G891–D936 and S960–V1047. A compositionally biased stretch (low complexity) spans S912–S931. Over residues S963–D977 the composition is skewed to basic and acidic residues. A compositionally biased stretch (low complexity) spans S1019–K1030. Residues D1036–G1046 are compositionally biased toward acidic residues. HEAT repeat units lie at residues V1047–L1086, E1091–W1128, I1167–K1204, and Q1209–E1246.

It belongs to the CLASP family. As to quaternary structure, interacts with microtubules.

It localises to the cytoplasm. Its subcellular location is the cytoskeleton. The protein resides in the microtubule organizing center. It is found in the centrosome. The protein localises to the chromosome. It localises to the centromere. Its subcellular location is the kinetochore. The protein resides in the spindle. It is found in the golgi apparatus. The protein localises to the trans-Golgi network. It localises to the cell membrane. Its subcellular location is the cell projection. The protein resides in the ruffle membrane. Functionally, microtubule plus-end tracking protein that promotes the stabilization of dynamic microtubules. Involved in the nucleation of noncentrosomal microtubules originating from the trans-Golgi network (TGN). Required for the polarization of the cytoplasmic microtubule arrays in migrating cells towards the leading edge of the cell. May act at the cell cortex to enhance the frequency of rescue of depolymerizing microtubules. This cortical microtubule stabilizing activity is regulated at least in part by phosphatidylinositol 3-kinase signaling. Also performs a similar stabilizing function at the kinetochore which is essential for the bipolar alignment of chromosomes on the mitotic spindle. This is CLIP-associating protein 2 (clasp2) from Danio rerio (Zebrafish).